The chain runs to 790 residues: Probable quinate dehydrogenase (quinone) (790 aa).

4 helical membrane passes run 22–42, 48–68, 77–94, and 106–126; these read GSWY…LIVL, ALVY…DAGL, LMLP…WPAL, and AYGV…GMFV. A disordered region spans residues 171–200; it reads RSNGRPAAGSPGPTTPGEIANSDGNGAEDQ. Low complexity predominate over residues 174-187; sequence GRPAAGSPGPTTPG.

This sequence belongs to the bacterial PQQ dehydrogenase family. Requires pyrroloquinoline quinone as cofactor.

Its subcellular location is the cell membrane. The catalysed reaction is L-quinate + a quinone = 3-dehydroquinate + a quinol. Its pathway is aromatic compound metabolism; 3,4-dihydroxybenzoate biosynthesis; 3-dehydroquinate from D-quinate (PQQ route): step 1/1. The sequence is that of Probable quinate dehydrogenase (quinone) (qumA) from Xanthomonas campestris pv. juglandis (Xanthomonas arboricola pv. juglandis).